A 109-amino-acid polypeptide reads, in one-letter code: uncharacterized protein (109 aa).

To A.fulgidus AF1885.

This is an uncharacterized protein from Methanocaldococcus jannaschii (strain ATCC 43067 / DSM 2661 / JAL-1 / JCM 10045 / NBRC 100440) (Methanococcus jannaschii).